Here is a 428-residue protein sequence, read N- to C-terminus: Putative heme-binding peroxidase (428 aa).

The tract at residues Met-1–Lys-33 is disordered. Positions Pro-21 to Ile-32 are enriched in polar residues. His-188 acts as the Proton acceptor in catalysis. His-312 is a heme b binding site. The Tryptophan radical intermediate role is filled by Trp-328.

This sequence belongs to the peroxidase family. Cytochrome c peroxidase subfamily. It depends on heme b as a cofactor.

In terms of biological role, destroys radicals which are normally produced within the cells and which are toxic to biological systems. In Debaryomyces hansenii (strain ATCC 36239 / CBS 767 / BCRC 21394 / JCM 1990 / NBRC 0083 / IGC 2968) (Yeast), this protein is Putative heme-binding peroxidase.